The primary structure comprises 278 residues: Nucleotide-binding protein Tbd_0529 (278 aa).

Position 8–15 (8–15 (GLSGSGKS)) interacts with ATP. A GTP-binding site is contributed by 57 to 60 (DARS).

This sequence belongs to the RapZ-like family.

Functionally, displays ATPase and GTPase activities. This is Nucleotide-binding protein Tbd_0529 from Thiobacillus denitrificans (strain ATCC 25259 / T1).